We begin with the raw amino-acid sequence, 103 residues long: uncharacterized protein (103 aa).

The disordered stretch occupies residues 69-103; sequence SSISYPGGGGGGGGSAKSLSSSKPGGGGGSPLIFL. Composition is skewed to gly residues over residues 74–83 and 92–103; these read PGGGGGGGGS and PGGGGGSPLIFL.

This is an uncharacterized protein from Saccharomyces cerevisiae (strain ATCC 204508 / S288c) (Baker's yeast).